The following is a 203-amino-acid chain: Small ribosomal subunit protein uS4 (203 aa).

One can recognise an S4 RNA-binding domain in the interval arginine 93–aspartate 154.

The protein belongs to the universal ribosomal protein uS4 family. In terms of assembly, part of the 30S ribosomal subunit. Contacts protein S5. The interaction surface between S4 and S5 is involved in control of translational fidelity.

In terms of biological role, one of the primary rRNA binding proteins, it binds directly to 16S rRNA where it nucleates assembly of the body of the 30S subunit. With S5 and S12 plays an important role in translational accuracy. In Chlorobaculum parvum (strain DSM 263 / NCIMB 8327) (Chlorobium vibrioforme subsp. thiosulfatophilum), this protein is Small ribosomal subunit protein uS4.